Here is a 200-residue protein sequence, read N- to C-terminus: Cleavage and polyadenylation specificity factor subunit 5 (200 aa).

In terms of domain architecture, Nudix hydrolase spans 45 to 170; the sequence is LRKAVEGIII…LSLIAVSLYE (126 aa). Residues 70–72 are interaction with RNA; that stretch reads NYF. A Nudix box motif is present at residues 77–98; the sequence is GKLKPGENEIDGLIRKLTKKLS.

Belongs to the Nudix hydrolase family. CPSF5 subfamily. As to quaternary structure, homodimer (via N- and C-terminus); binds RNA as homodimer. Component of the cleavage factor Im (CFIm) complex.

Its subcellular location is the nucleus. It is found in the cytoplasm. In terms of biological role, component of the cleavage factor Im (CFIm) complex that functions as an activator of the pre-mRNA 3'-end cleavage and polyadenylation processing required for the maturation of pre-mRNA into functional mRNAs. CFIm contributes to the recruitment of multiprotein complexes on specific sequences on the pre-mRNA 3'-end, so called cleavage and polyadenylation signals (pA signals). Most pre-mRNAs contain multiple pA signals, resulting in alternative cleavage and polyadenylation (APA) producing mRNAs with variable 3'-end formation. The CFIm complex acts as a key regulator of cleavage and polyadenylation site choice during APA through its binding to 5'-UGUA-3' elements localized in the 3'-untranslated region (UTR) for a huge number of pre-mRNAs. Binds to 5'-UGUA-3' elements localized upstream of pA signals that act as enhancers of pre-mRNA 3'-end processing. The homodimer mediates simultaneous sequence-specific recognition of two 5'-UGUA-3' elements within the pre-mRNA. Plays a role in somatic cell fate transitions and pluripotency by regulating widespread changes in gene expression through an APA-dependent function. Binds to chromatin. The sequence is that of Cleavage and polyadenylation specificity factor subunit 5 from Dictyostelium discoideum (Social amoeba).